Here is a 197-residue protein sequence, read N- to C-terminus: MYAYLKGIITKITAKYIVLETNGIGYILHVANPYAYSGQVNQEAQIYVHQVVREDAHLLYGFRSEDEKKLFLSLISVSGIGPVSALAIIAADDNAGLVQAIETKNITYLTKFPKIGKKTAQQMVLDLEGKVVVAGDGLPAKVAVQASAENQELEEAMEAMLALGYKATELKKIKKFFEGTTDTAENYIKSALKMLVK.

The segment at M1–R63 is domain I. The tract at residues S64–V142 is domain II. Positions A143–S147 are flexible linker. The tract at residues A148–K197 is domain III.

Belongs to the RuvA family. As to quaternary structure, homotetramer. Forms an RuvA(8)-RuvB(12)-Holliday junction (HJ) complex. HJ DNA is sandwiched between 2 RuvA tetramers; dsDNA enters through RuvA and exits via RuvB. An RuvB hexamer assembles on each DNA strand where it exits the tetramer. Each RuvB hexamer is contacted by two RuvA subunits (via domain III) on 2 adjacent RuvB subunits; this complex drives branch migration. In the full resolvosome a probable DNA-RuvA(4)-RuvB(12)-RuvC(2) complex forms which resolves the HJ.

It localises to the cytoplasm. In terms of biological role, the RuvA-RuvB-RuvC complex processes Holliday junction (HJ) DNA during genetic recombination and DNA repair, while the RuvA-RuvB complex plays an important role in the rescue of blocked DNA replication forks via replication fork reversal (RFR). RuvA specifically binds to HJ cruciform DNA, conferring on it an open structure. The RuvB hexamer acts as an ATP-dependent pump, pulling dsDNA into and through the RuvAB complex. HJ branch migration allows RuvC to scan DNA until it finds its consensus sequence, where it cleaves and resolves the cruciform DNA. The chain is Holliday junction branch migration complex subunit RuvA from Streptococcus pneumoniae serotype 2 (strain D39 / NCTC 7466).